Here is a 256-residue protein sequence, read N- to C-terminus: Alcohol dehydrogenase (256 aa).

12–35 (FVAGLGGIGLDTSKELVKRDLKNL) serves as a coordination point for NAD(+). S140 provides a ligand contact to substrate. The active-site Proton acceptor is Y153.

It belongs to the short-chain dehydrogenases/reductases (SDR) family. As to quaternary structure, homodimer.

It catalyses the reaction a primary alcohol + NAD(+) = an aldehyde + NADH + H(+). The catalysed reaction is a secondary alcohol + NAD(+) = a ketone + NADH + H(+). The sequence is that of Alcohol dehydrogenase (Adh) from Drosophila erecta (Fruit fly).